A 293-amino-acid chain; its full sequence is Probable endonuclease 4 (293 aa).

Zn(2+) contacts are provided by histidine 77, histidine 118, glutamate 153, aspartate 187, histidine 190, histidine 221, aspartate 234, histidine 236, and glutamate 266.

It belongs to the AP endonuclease 2 family. Requires Zn(2+) as cofactor.

It carries out the reaction Endonucleolytic cleavage to 5'-phosphooligonucleotide end-products.. Endonuclease IV plays a role in DNA repair. It cleaves phosphodiester bonds at apurinic or apyrimidinic (AP) sites, generating a 3'-hydroxyl group and a 5'-terminal sugar phosphate. In Mesoplasma florum (strain ATCC 33453 / NBRC 100688 / NCTC 11704 / L1) (Acholeplasma florum), this protein is Probable endonuclease 4.